The following is a 111-amino-acid chain: MTRGFGPFGKIQEALKKAQEVRDGAQRLQKELEEMEIVGEAGNGLVKVTVNGNQEPLKVSLDPQVLQESVDVVEDLLLTAMVNAYTQSAETMRKRMEELTGNISLPGLGLG.

It belongs to the YbaB/EbfC family. In terms of assembly, homodimer.

It is found in the cytoplasm. The protein localises to the nucleoid. In terms of biological role, binds to DNA and alters its conformation. May be involved in regulation of gene expression, nucleoid organization and DNA protection. The chain is Nucleoid-associated protein CYB_2894 from Synechococcus sp. (strain JA-2-3B'a(2-13)) (Cyanobacteria bacterium Yellowstone B-Prime).